Consider the following 486-residue polypeptide: Glutamyl-tRNA(Gln) amidotransferase subunit A (486 aa).

Catalysis depends on charge relay system residues K74 and S149. Residue S173 is the Acyl-ester intermediate of the active site.

This sequence belongs to the amidase family. GatA subfamily. In terms of assembly, heterotrimer of A, B and C subunits.

The enzyme catalyses L-glutamyl-tRNA(Gln) + L-glutamine + ATP + H2O = L-glutaminyl-tRNA(Gln) + L-glutamate + ADP + phosphate + H(+). In terms of biological role, allows the formation of correctly charged Gln-tRNA(Gln) through the transamidation of misacylated Glu-tRNA(Gln) in organisms which lack glutaminyl-tRNA synthetase. The reaction takes place in the presence of glutamine and ATP through an activated gamma-phospho-Glu-tRNA(Gln). This chain is Glutamyl-tRNA(Gln) amidotransferase subunit A, found in Prochlorococcus marinus (strain NATL2A).